Consider the following 217-residue polypeptide: MKRHANRIGEEFSQTVQFIKSETTLKQKKTKIDVQNVYGLDRNTKNLEKRDIQFLENDKLDLNSHENEGEKTKTETVPTRKQFPKVGEFNSAIHGLSSESVLRTCFRVGEVLAVFRMKRRDVCIIVEFFAKVRSAKKVGNVILYYFEDAFRGQKSPAIFAKYYSCCEISPLLTKPATMIRVVGIVSHAEKILKVIHIASSDLDELWDTYNMVLYETL.

Functionally, has a role in meiosis. The polypeptide is Meiotically up-regulated gene 37 protein (mug37) (Schizosaccharomyces pombe (strain 972 / ATCC 24843) (Fission yeast)).